The sequence spans 908 residues: Alanine--tRNA ligase (908 aa).

Residues His-596, His-600, Cys-698, and His-702 each coordinate Zn(2+).

It belongs to the class-II aminoacyl-tRNA synthetase family. Zn(2+) serves as cofactor.

It localises to the cytoplasm. The enzyme catalyses tRNA(Ala) + L-alanine + ATP = L-alanyl-tRNA(Ala) + AMP + diphosphate. Catalyzes the attachment of alanine to tRNA(Ala) in a two-step reaction: alanine is first activated by ATP to form Ala-AMP and then transferred to the acceptor end of tRNA(Ala). Also edits incorrectly charged Ser-tRNA(Ala) and Gly-tRNA(Ala) via its editing domain. This is Alanine--tRNA ligase from Lysinibacillus sphaericus (strain C3-41).